The primary structure comprises 388 residues: MMMPHLSEDLVEEILSRVPAISLKRLRYTCKQWNALFNDQRFSKKHRDKAPKTYLGLTLKDFRIYSMSSNLHGLLHNNNIDLLMEFKGKLSSLNDLNDFEISQIYPCDGLILCSTKRNTRLVVWNPCTGQTRWIKRRNRRMCDTFAFGYDNSKSSCLNNYKILRVCEKIKGQQFEYEIFEFSSNSWRVLDVNPNCIIEGRSVSVKGNSYWFATITKTHYFIRRFDFSSETFQKLPLPFHIFDYNDSRALSAFREEQLSVLHQSFDTEKMDIWVTNKIDETTDWSWSKFFTVRLINRLDYPISMMMKSPLSFFIDEKKNIILCYDKHRENTYKSLVLIVGKDKVYREFYFPESYELGRTYLCNYVPSLVQIKQSGLISTRKRKRKDFSS.

Residues 1–46 (MMMPHLSEDLVEEILSRVPAISLKRLRYTCKQWNALFNDQRFSKKH) enclose the F-box domain.

This chain is Putative F-box protein At3g17490, found in Arabidopsis thaliana (Mouse-ear cress).